The primary structure comprises 327 residues: Malate dehydrogenase (327 aa).

12–18 provides a ligand contact to NAD(+); sequence GAAGQIG. The substrate site is built by Arg-93 and Arg-99. NAD(+) is bound by residues Asn-106, Gln-113, and 130-132; that span reads VGN. 2 residues coordinate substrate: Asn-132 and Arg-163. Residue His-188 is the Proton acceptor of the active site.

This sequence belongs to the LDH/MDH superfamily. MDH type 2 family.

It catalyses the reaction (S)-malate + NAD(+) = oxaloacetate + NADH + H(+). Functionally, catalyzes the reversible oxidation of malate to oxaloacetate. This is Malate dehydrogenase from Cupriavidus pinatubonensis (strain JMP 134 / LMG 1197) (Cupriavidus necator (strain JMP 134)).